The following is a 233-amino-acid chain: Ubiquitin carboxyl-terminal hydrolase isozyme L4 (233 aa).

Residues 5–232 (RWLPLEANPE…LRFNAIALSA (228 aa)) form the UCH catalytic domain. The interaction with ubiquitin stretch occupies residues 8-13 (PLEANP). Residue Cys-95 is the Nucleophile of the active site. At Ser-133 the chain carries Phosphoserine. His-172 functions as the Proton donor in the catalytic mechanism. Positions 222 to 227 (ELRFNA) are interaction with ubiquitin.

Belongs to the peptidase C12 family. As to expression, expressed in various tissues at low level.

It localises to the cytoplasm. It catalyses the reaction Thiol-dependent hydrolysis of ester, thioester, amide, peptide and isopeptide bonds formed by the C-terminal Gly of ubiquitin (a 76-residue protein attached to proteins as an intracellular targeting signal).. In terms of biological role, ubiquitin-protein hydrolase is involved both in the processing of ubiquitin precursors and of ubiquitinated proteins. This enzyme is a thiol protease that recognizes and hydrolyzes a peptide bond at the C-terminal glycine of ubiquitin. The sequence is that of Ubiquitin carboxyl-terminal hydrolase isozyme L4 (Uchl4) from Mus musculus (Mouse).